A 257-amino-acid chain; its full sequence is MSISIKNLILDAWNFFVNQIINIIFFSTISAIISSLINYIFLPNRDELFTLANLISDFNGSINNINYLFQKMSIEQKYILFKLSLSNHLSSLVGNAFLFSNIITMINTICDKKRFFNIFNNIILSSSLIPKFLTLIFLISFLTQCGMALMLIPGIIVLIFLSFSPILITKKNISITDSIKISVNITFKNIKTVAPIIFLWLLIKLIILVISSQISINGFLSSVKIFFYLINNIITVYIIIYMYRLYLLSKIKKNKYL.

The next 6 helical transmembrane spans lie at 23 to 43 (IIFFSTISAIISSLINYIFLP), 89 to 109 (LSSLVGNAFLFSNIITMINTI), 122 to 142 (IILSSSLIPKFLTLIFLISFL), 148 to 168 (ALMLIPGIIVLIFLSFSPILI), 190 to 210 (IKTVAPIIFLWLLIKLIILVI), and 223 to 243 (VKIFFYLINNIITVYIIIYMY).

It belongs to the UPF0259 family.

Its subcellular location is the cell membrane. This Wigglesworthia glossinidia brevipalpis protein is UPF0259 membrane protein WIGBR3650.